The chain runs to 494 residues: ATP synthase subunit beta, chloroplastic (494 aa).

Position 172-179 (172-179) interacts with ATP; sequence GGAGVGKT.

It belongs to the ATPase alpha/beta chains family. In terms of assembly, F-type ATPases have 2 components, CF(1) - the catalytic core - and CF(0) - the membrane proton channel. CF(1) has five subunits: alpha(3), beta(3), gamma(1), delta(1), epsilon(1). CF(0) has four main subunits: a(1), b(1), b'(1) and c(9-12).

It is found in the plastid. The protein resides in the chloroplast thylakoid membrane. The enzyme catalyses ATP + H2O + 4 H(+)(in) = ADP + phosphate + 5 H(+)(out). Its function is as follows. Produces ATP from ADP in the presence of a proton gradient across the membrane. The catalytic sites are hosted primarily by the beta subunits. The protein is ATP synthase subunit beta, chloroplastic of Physcomitrium patens (Spreading-leaved earth moss).